Consider the following 428-residue polypeptide: Kynureninase (428 aa).

Residues threonine 104, threonine 105, 132-135 (FPSD), aspartate 213, histidine 216, and tyrosine 238 each bind pyridoxal 5'-phosphate. Lysine 239 carries the N6-(pyridoxal phosphate)lysine modification. The pyridoxal 5'-phosphate site is built by tryptophan 267 and threonine 295.

The protein belongs to the kynureninase family. As to quaternary structure, homodimer. It depends on pyridoxal 5'-phosphate as a cofactor.

The enzyme catalyses L-kynurenine + H2O = anthranilate + L-alanine + H(+). It carries out the reaction 3-hydroxy-L-kynurenine + H2O = 3-hydroxyanthranilate + L-alanine + H(+). It participates in amino-acid degradation; L-kynurenine degradation; L-alanine and anthranilate from L-kynurenine: step 1/1. The protein operates within cofactor biosynthesis; NAD(+) biosynthesis; quinolinate from L-kynurenine: step 2/3. In terms of biological role, catalyzes the cleavage of L-kynurenine (L-Kyn) and L-3-hydroxykynurenine (L-3OHKyn) into anthranilic acid (AA) and 3-hydroxyanthranilic acid (3-OHAA), respectively. The polypeptide is Kynureninase (Geobacillus thermodenitrificans (strain NG80-2)).